The sequence spans 144 residues: Large ribosomal subunit protein uL15 (144 aa).

Positions 1 to 59 (MELNNLKPAEGAKHAKRRVGRGIGSGLGKTAGRGHKGQKSRSGGFHKVGFEGGQMPLQR) are disordered. Gly residues predominate over residues 21-31 (RGIGSGLGKTA).

Belongs to the universal ribosomal protein uL15 family. As to quaternary structure, part of the 50S ribosomal subunit.

In terms of biological role, binds to the 23S rRNA. This chain is Large ribosomal subunit protein uL15, found in Burkholderia thailandensis (strain ATCC 700388 / DSM 13276 / CCUG 48851 / CIP 106301 / E264).